The chain runs to 242 residues: Probable transcriptional regulatory protein Dred_1658 (242 aa).

It belongs to the TACO1 family.

It localises to the cytoplasm. This Desulforamulus reducens (strain ATCC BAA-1160 / DSM 100696 / MI-1) (Desulfotomaculum reducens) protein is Probable transcriptional regulatory protein Dred_1658.